The following is a 559-amino-acid chain: Potassium-transporting ATPase potassium-binding subunit (559 aa).

Transmembrane regions (helical) follow at residues 6–26, 63–83, 131–151, 173–193, 253–273, 283–303, 327–347, 356–376, 379–399, 416–436, 484–504, and 524–544; these read FLLI…LGNV, LLAI…MLML, VGLT…IFAL, ITLW…IQQG, FVQM…FGDV, LLWA…WAEW, FGIL…CGAV, ALGG…FGGV, GLYG…LMIG, LTAL…ALAL, LLAF…MAIA, and GALF…LTFI.

It belongs to the KdpA family. In terms of assembly, the system is composed of three essential subunits: KdpA, KdpB and KdpC.

The protein localises to the cell inner membrane. In terms of biological role, part of the high-affinity ATP-driven potassium transport (or Kdp) system, which catalyzes the hydrolysis of ATP coupled with the electrogenic transport of potassium into the cytoplasm. This subunit binds the periplasmic potassium ions and delivers the ions to the membrane domain of KdpB through an intramembrane tunnel. The protein is Potassium-transporting ATPase potassium-binding subunit of Enterobacter sp. (strain 638).